A 225-amino-acid chain; its full sequence is 3-demethoxyubiquinol 3-hydroxylase (225 aa).

Residues Met1–Thr11 show a composition bias toward polar residues. The disordered stretch occupies residues Met1–Leu20. The Fe cation site is built by Glu74, Glu104, His107, Glu156, Glu188, and His191. The interval Val181–Leu203 is disordered. Positions Met184–Ala195 are enriched in basic and acidic residues.

It belongs to the COQ7 family. It depends on Fe cation as a cofactor.

Its subcellular location is the cell membrane. The catalysed reaction is a 5-methoxy-2-methyl-3-(all-trans-polyprenyl)benzene-1,4-diol + AH2 + O2 = a 3-demethylubiquinol + A + H2O. The protein operates within cofactor biosynthesis; ubiquinone biosynthesis. Catalyzes the hydroxylation of 2-nonaprenyl-3-methyl-6-methoxy-1,4-benzoquinol during ubiquinone biosynthesis. In Bordetella petrii (strain ATCC BAA-461 / DSM 12804 / CCUG 43448), this protein is 3-demethoxyubiquinol 3-hydroxylase.